Reading from the N-terminus, the 911-residue chain is Alpha-actinin-4 (911 aa).

The segment at 1 to 269 (MVDYHAANQA…YVSSFYHAFS (269 aa)) is actin-binding. Positions 12 to 26 (QYGPSSGGNGTGGGG) are interaction with VCL. Positions 12-31 (QYGPSSGGNGTGGGGGMGDY) are disordered. The span at 16-29 (SSGGNGTGGGGGMG) shows a compositional bias: gly residues. Position 31 is a phosphotyrosine (Y31). The tract at residues 40–61 (RDLLLDPAWEKQQRKTFTAWCN) is interaction with VCL. Calponin-homology (CH) domains follow at residues 50-154 (KQQR…LRFA) and 163-269 (TSAK…HAFS). Positions 84–88 (LMLLL) match the LXXLL motif motif. The segment at 108–126 (KINNVNKALDFIASKGVKL) is interaction with VCL. K114 is modified (N6-acetyllysine). The tract at residues 177-192 (TAPYKNVNVQNFHISW) is polyphosphoinositide (PIP2)-binding. At K214 the chain carries N6-acetyllysine. A Phosphothreonine modification is found at T249. Spectrin repeat units follow at residues 293 to 403 (HLME…WLLN), 413 to 518 (HLAE…ALEK), 528 to 639 (QLHL…ALLE), and 649 to 752 (HLRR…EVEN). An N6-acetyllysine mark is found at K592 and K625. Residue S696 is modified to Phosphoserine. The mediates interaction with MICALL2 stretch occupies residues 736–911 (WEQLLTTIAR…STALYGESDL (176 aa)). 2 consecutive EF-hand domains span residues 765–800 (EQMQEFRASFNHFDKDHGGALGPEEFKACLISLGYD) and 806–841 (QGDAEFNRIMSVVDPNHSGLVTFQAFIDFMSRETTD). D778 serves as a coordination point for Ca(2+). Residue K779 is modified to N6-acetyllysine. D780 and E789 together coordinate Ca(2+). An N6-acetyllysine modification is found at K859. S909 carries the phosphoserine modification.

This sequence belongs to the alpha-actinin family. As to quaternary structure, homodimer; antiparallel. Interacts with MAGI1. Interacts with MICALL2 (preferentially in opened conformation); stimulated by RAB13 activation. Identified in a IGF2BP1-dependent mRNP granule complex containing untranslated mRNAs. Component of the CART complex, at least composed of ACTN4, HGS/HRS, MYO5B and TRIM3. Binds TRIM3 at the N-terminus. Interacts with PDLIM2. Identified in a complex with CASK, IQGAP1, MAGI2, NPHS1, SPTAN1 and SPTBN1. Interacts with PPARG and RARA. Binds to VCL; this interaction triggers VCL conformational changes. Interacts with SEPTIN14. Interacts with IGSF8. Expressed in the foot process layer of podocytes in the kidney glomerulus but not in tubules (at protein level).

Its subcellular location is the nucleus. The protein localises to the cytoplasm. The protein resides in the cell junction. It localises to the cytoskeleton. It is found in the stress fiber. Its subcellular location is the perinuclear region. F-actin cross-linking protein which is thought to anchor actin to a variety of intracellular structures. This is a bundling protein. Probably involved in vesicular trafficking via its association with the CART complex. The CART complex is necessary for efficient transferrin receptor recycling but not for EGFR degradation. Involved in tight junction assembly in epithelial cells probably through interaction with MICALL2. Links MICALL2 to the actin cytoskeleton and recruits it to the tight junctions. May also function as a transcriptional coactivator, stimulating transcription mediated by the nuclear hormone receptors PPARG and RARA. Association with IGSF8 regulates the immune synapse formation and is required for efficient T-cell activation. The sequence is that of Alpha-actinin-4 from Rattus norvegicus (Rat).